The chain runs to 9439 residues: Extracellular matrix-binding protein ebh (9439 aa).

30 FIVAR domains span residues 1815–1871 (ARRR…VNSA), 1901–1957 (AKEQ…INDA), 1985–2041 (AYDT…VRDA), 2071–2127 (AKKR…ITSE), 2155–2211 (AYNK…VTQA), 2241–2297 (AKNR…ISSE), 2325–2381 (AYNK…VEDA), 2411–2467 (AKEK…ITEN), 2488–2551 (DTTS…VNNA), 2581–2638 (ARNR…STEI), 2665–2720 (AKNQ…IRTN), 2748–2804 (AKTA…VSDE), 2832–2888 (AYNQ…VNNA), 2918–2974 (AKEQ…ISNA), 3002–3058 (AYNQ…VTAA), 3088–3144 (AKQQ…ITNE), 3172–3228 (AYNQ…VAQA), 3258–3314 (AKNQ…ISDE), 3335–3398 (DTTE…VNNA), 3428–3484 (ARLN…ITTE), 3512–3567 (AKTA…IKTN), 3595–3650 (IKRQ…VKES), 3678–3733 (AKNR…IRQN), 3802–3860 (SMTA…IDQK), 3928–3983 (AMTQ…LDPA), 4056–4114 (AMQA…VNQK), 4182–4240 (SMGT…VDNA), 4308–4365 (AMHT…INQK), 4433–4491 (VMEQ…IEQA), and 4559–4617 (SMQT…IDQT). Basic and acidic residues predominate over residues 2495 to 2507 (EVRKLSRRGDTNN). The disordered stretch occupies residues 2495–2514 (EVRKLSRRGDTNNKKPSSVS). Polar residues predominate over residues 2925-2938 (AVDQVPSTEGMTQQ). Residues 2925 to 2951 (AVDQVPSTEGMTQQTKDDYNSKQQAAQ) form a disordered region. A disordered region spans residues 4649 to 4674 (GYLNDPQKSGEESLVNGSNTRSEVEE). 14 consecutive FIVAR domains span residues 4685-4743 (AMKQ…IEQK), 4811-4869 (AMQA…IEQA), 4937-4995 (AMSN…IEQA), 5063-5115 (AMEA…VLDK), 5189-5246 (AMLG…INQL), 5314-5372 (LMGA…VTTA), 5440-5498 (AMGE…IDQA), 5566-5624 (AMKK…ITNA), 5692-5750 (AMKQ…IADT), 5818-5875 (DMST…LQDL), 5943-6000 (AMKA…IKQA), 6068-6126 (KMEE…INRT), 6194-6252 (AMQQ…IQAI), and 6320-6378 (EMGT…IADA). Residues 5699-5712 (QVNQDDQISNSSPF) show a composition bias toward polar residues. The tract at residues 5699-5719 (QVNQDDQISNSSPFINEDSDK) is disordered. A disordered region spans residues 6413 to 6434 (NNSQRQSEHDEINSAPSRTEVS). FIVAR domains follow at residues 6446 to 6504 (AMRQ…IEDA), 6572 to 6630 (AMKA…INRA), 6698 to 6755 (SMNQ…IDQA), 6823 to 6877 (TMKA…ANDE), 6949 to 7007 (AMKK…INTI), 7075 to 7133 (SMNT…VERA), 7201 to 7259 (DMKK…IENA), 7327 to 7384 (AMKH…IKQL), 7452 to 7510 (AMEN…IEHA), 7578 to 7636 (AMKA…INSI), 7704 to 7762 (AMET…VDIV), 7830 to 7888 (AMKS…VRQA), 7956 to 8010 (VMGK…TKQA), 8078 to 8137 (IMGE…IDTF), 8205 to 8264 (AMKS…IQGL), 8332 to 8391 (AMKD…VLGL), 8459 to 8518 (KMKL…IQHL), and 8587 to 8643 (AMQG…ANII). A helical transmembrane segment spans residues 9306–9324 (TVGVITLTGLLSSFWLVLA). Basic and acidic residues-rich tracts occupy residues 9363-9375 (DKEE…DKHS), 9386-9395 (EKQLSEEDIH), and 9404-9413 (QNSDNKDTKQ). Residues 9363 to 9439 (DKEEQIQNDD…VVKTKKRSKK (77 aa)) form a disordered region. The segment covering 9414–9439 (KKVTSKKKKTPQSTKKVVKTKKRSKK) has biased composition (basic residues).

The protein localises to the cell membrane. This is Extracellular matrix-binding protein ebh (ebh) from Staphylococcus epidermidis (strain ATCC 12228 / FDA PCI 1200).